Reading from the N-terminus, the 287-residue chain is Nucleotide-binding protein VV0445 (287 aa).

8-15 (GHSGAGKS) is a binding site for ATP. 56-59 (DVRN) serves as a coordination point for GTP.

This sequence belongs to the RapZ-like family.

Displays ATPase and GTPase activities. This is Nucleotide-binding protein VV0445 from Vibrio vulnificus (strain YJ016).